A 405-amino-acid polypeptide reads, in one-letter code: Imidazolonepropionase (405 aa).

Residues histidine 70 and histidine 72 each coordinate Fe(3+). The Zn(2+) site is built by histidine 70 and histidine 72. 4-imidazolone-5-propanoate contacts are provided by arginine 79, tyrosine 142, and histidine 175. Tyrosine 142 contributes to the N-formimidoyl-L-glutamate binding site. Residue histidine 240 coordinates Fe(3+). Histidine 240 contributes to the Zn(2+) binding site. Glutamine 243 lines the 4-imidazolone-5-propanoate pocket. Aspartate 315 lines the Fe(3+) pocket. Aspartate 315 lines the Zn(2+) pocket. Asparagine 317 and glycine 319 together coordinate N-formimidoyl-L-glutamate. Serine 320 is a 4-imidazolone-5-propanoate binding site.

The protein belongs to the metallo-dependent hydrolases superfamily. HutI family. Requires Zn(2+) as cofactor. Fe(3+) is required as a cofactor.

It is found in the cytoplasm. The catalysed reaction is 4-imidazolone-5-propanoate + H2O = N-formimidoyl-L-glutamate. It functions in the pathway amino-acid degradation; L-histidine degradation into L-glutamate; N-formimidoyl-L-glutamate from L-histidine: step 3/3. In terms of biological role, catalyzes the hydrolytic cleavage of the carbon-nitrogen bond in imidazolone-5-propanoate to yield N-formimidoyl-L-glutamate. It is the third step in the universal histidine degradation pathway. The protein is Imidazolonepropionase of Ruegeria sp. (strain TM1040) (Silicibacter sp.).